We begin with the raw amino-acid sequence, 527 residues long: Cytokinin dehydrogenase 6 (527 aa).

An N-terminal signal peptide occupies residues 1–22 (MAARCSIAFMVMASCLSVVVSG). The 182-residue stretch at 55–236 (VAAAPEAVLH…TRARIGLEPA (182 aa)) folds into the FAD-binding PCMH-type domain. FAD-binding residues include Gly91 and Gly93. His94 is subject to Pros-8alpha-FAD histidine. FAD contacts are provided by Ser95 and Gln99. Asn121 carries an N-linked (GlcNAc...) asparagine glycan. FAD contacts are provided by Asp160, Thr165, Ser171, Ile175, and Ile226. N-linked (GlcNAc...) asparagine glycosylation is found at Asn280 and Asn323. Tyr475, Ser510, and Gln513 together coordinate FAD.

Belongs to the oxygen-dependent FAD-linked oxidoreductase family. Monomer. The cofactor is FAD.

The protein localises to the secreted. The protein resides in the extracellular space. It carries out the reaction N(6)-dimethylallyladenine + A + H2O = 3-methyl-2-butenal + adenine + AH2. Catalyzes the oxidation of cytokinins, a family of N(6)-substituted adenine derivatives that are plant hormones, where the substituent is an isopentenyl group. This chain is Cytokinin dehydrogenase 6 (CKX6), found in Oryza sativa subsp. japonica (Rice).